The chain runs to 753 residues: Polyribonucleotide nucleotidyltransferase (753 aa).

Residues D543 and D549 each contribute to the Mg(2+) site. The KH domain maps to 609 to 668 (PRITTVKIPVAKIGELIGPKGKNINALTEETGANISIEDDGTVFISAADGASAEAAIEKI). An S1 motif domain is found at 680 to 749 (GERFLGTVVK…NRGKISLVPV (70 aa)).

This sequence belongs to the polyribonucleotide nucleotidyltransferase family. Mg(2+) is required as a cofactor.

It localises to the cytoplasm. The catalysed reaction is RNA(n+1) + phosphate = RNA(n) + a ribonucleoside 5'-diphosphate. Involved in mRNA degradation. Catalyzes the phosphorolysis of single-stranded polyribonucleotides processively in the 3'- to 5'-direction. The chain is Polyribonucleotide nucleotidyltransferase from Corynebacterium glutamicum (strain R).